A 179-amino-acid chain; its full sequence is Probable protein archease (179 aa).

Ca(2+) contacts are provided by aspartate 55, aspartate 178, and valine 179.

It belongs to the archease family.

Functionally, activates the tRNA-splicing ligase complex by facilitating the enzymatic turnover of catalytic subunit RtcB. Acts by promoting the guanylylation of RtcB, a key intermediate step in tRNA ligation. Can also alter the NTP specificity of RtcB such that ATP, dGTP or ITP is used efficiently. The polypeptide is Probable protein archease (Mycobacterium tuberculosis (strain CDC 1551 / Oshkosh)).